The primary structure comprises 861 residues: Methyltransferase/ribosomally synthesized type III borosin cyclic peptide precursor aboMAa (861 aa).

Residues 1 to 279 (MSSPAVETKV…AISTFYLPPK (279 aa)) are methyltransferase domain. Residues R100, Y104, and Y126 contribute to the active site. S-adenosyl-L-methionine-binding residues include Y126, H128, V131, A158, Q200, A241, S272, and T273. The clasp domain stretch occupies residues 280-408 (ALSPLHEESA…GLVRSVMKTS (129 aa)). Positions 409–799 (PEDVAKQFVQ…PPDLEELPIP (391 aa)) are type III-specific C-terminal domain. Disordered regions lie at residues 575–596 (NGAF…SSQG) and 772–801 (EAAE…IPDA). Residues 579–593 (PSGGGGGSGGGGGSS) show a composition bias toward gly residues. Over residues 772–783 (EAAEKDSAVDDE) the composition is skewed to basic and acidic residues. The segment covering 784–797 (KFADEEPPDLEELP) has biased composition (acidic residues). 2 positions are modified to N-methylvaline: V805 and V807. 9 repeat units span residues 805 to 809 (VDVTD), 810 to 814 (VDVTD), 815 to 819 (VDVTD), 820 to 824 (VDVTD), 825 to 829 (VDVTD), 830 to 834 (VDVTD), 835 to 839 (VDVTD), 840 to 844 (VDVTD), and 845 to 849 (VDVTD). Residues 805–854 (VDVTDVDVTDVDVTDVDVTDVDVTDVDVTDVDVTDVDVTDVDVTDVDVVD) form a 10 X 5 AA tandem repeats of VDVTD region. N-methylthreonine is present on T808. V810 and V812 each carry N-methylvaline. Position 813 is an N-methylthreonine (T813). Residues V815 and V817 each carry the N-methylvaline modification. T818 is subject to N-methylthreonine. Residues V820 and V822 each carry the N-methylvaline modification. T823 carries the post-translational modification N-methylthreonine. V825 and V827 each carry N-methylvaline. At T828 the chain carries N-methylthreonine. Residues V830 and V832 each carry the N-methylvaline modification. Position 833 is an N-methylthreonine (T833). The 10; approximate repeat unit spans residues 850-854 (VDVVD).

This sequence in the N-terminal section; belongs to the precorrin methyltransferase family. AboMA automethylates at Val-805, Val-807, Thr-808, Val-810, Val-812, Thr-813, Val-815, Val-817, Thr-818, Val-820, Val-822, Thr-823, Val-825, Val-827 and Thr-828, Val-830, Val-832 and T-833 before being processed by a prolyloligopeptidase which likely forms a peptidyl ester upon removal of the follower propeptide, which then undergoes macrocyclization with the N-terminus of the modified core peptide. Peptide backbone alpha-N-methylations change the physicochemical properties of amide bonds to provide structural constraints and other favorable characteristics including biological membrane permeability to peptides.

The protein operates within secondary metabolite biosynthesis. Fusion protein of the methyltransferase aboM and a type III borosin core peptide; part of the gene cluster that mediates the biosynthesis of a type III borosin, a highly methylated cyclic peptide with potent biological activities. Type III borosins derive from the C-terminus of the fusion protein, and it is the same protein that methylates its own C-terminus using S-adenosyl methionine (SAM). The C-terminus is subsequently cleaved off and macrocyclized by a prolyloligopeptidase to give the final product. This chain is Methyltransferase/ribosomally synthesized type III borosin cyclic peptide precursor aboMAa, found in Anomoporia bombycina (Polyporus bombycinus).